A 1004-amino-acid polypeptide reads, in one-letter code: MVRPPSARSAVPGVGRLGLLDPTAAASLRELGWDNVESIPVLWALSRAPDADLALNTLMRLREALGSDWQRLDSAIRTDTSLRGRLFALLGSSTALGDHLVAEPAAWEVLRRGDLPDRDELLADLLAAVQATPEAGPHAGPMLFRAGIAGPEAVALLRCRYRDQLMLLAALDLAATVENEPVLPYRVVGRHLTDLADAALTAALAVAVARVCKDQPCPVRLAVIAMGKCGARELNYVSDVDVVFVAEPADATATRLAAEMMSVGSQAFFEVDAALRPEGKQGALVRTLDSHLTYYKRWARTWEFQALLKNRPMTGDLELGREYRDAVMPMVWTASERPDFVPEVQGMRRRVEDLVPAELRERELKLGRGSLRDVEFAVQLLQLVHGRVDENLHVASTVDALSALAAGGYVGRDDAANLTASYEFLRLLEHRLQLQRLKRTHTLPADDDEEGMRWLARAAHIRPDGRQDAMGVLRSEIRRNAVRVRRLHAKLFYRPLLEAVVRMDPDALRLSPDAAVRQLAALGYAAPENAFGHLKALTGGVSRKGRIQALLLPTLLEWLGETPNPDAGLLAYRRVSEALDEQTWFLRELRDEGAVAQRLMIVLGSSEFLPDLLINAPETIRMFADGPHGPLLLGPQPEEVARGILTAAARYDDPNRAVAAARSLRRHELARVASADLLGMLEVPQVCRALSSVWVAVLDAALAAVIRAGEAESGEPAPAAFAVIGMGRLGGMELGYGSDADVLFVCEPRPGVDETKAVKWANTVAERVQRLLGAPSTDPPLHVDAGLRPEGRSGALVRTLSAYQAYYGQWAQSWEVQALLRAHQVAGDQELGVRFLHAVDKVRYPAGGVSEDAVREIRRIKARVDSERLPRGADPATHTKLGRGGLADIEWTVQLLQLRHAHEVESLHNTATLETLAAIEKAELLAAEDVALLRDSWLLATKARNALVLVRGKPSDQLPGPGRLLSAVATVAGWPNNDGGSEFLDHYLRITRRARAVVERVFGS.

The tract at residues 1-496 (MVRPPSARSA…LHAKLFYRPL (496 aa)) is adenylyl removase. Residues 502 to 1004 (RMDPDALRLS…RAVVERVFGS (503 aa)) are adenylyl transferase.

The protein belongs to the GlnE family. Mg(2+) serves as cofactor.

The enzyme catalyses [glutamine synthetase]-O(4)-(5'-adenylyl)-L-tyrosine + phosphate = [glutamine synthetase]-L-tyrosine + ADP. It catalyses the reaction [glutamine synthetase]-L-tyrosine + ATP = [glutamine synthetase]-O(4)-(5'-adenylyl)-L-tyrosine + diphosphate. Involved in the regulation of glutamine synthetase GlnA, a key enzyme in the process to assimilate ammonia. When cellular nitrogen levels are high, the C-terminal adenylyl transferase (AT) inactivates GlnA by covalent transfer of an adenylyl group from ATP to specific tyrosine residue of GlnA, thus reducing its activity. Conversely, when nitrogen levels are low, the N-terminal adenylyl removase (AR) activates GlnA by removing the adenylyl group by phosphorolysis, increasing its activity. The regulatory region of GlnE binds the signal transduction protein PII (GlnB) which indicates the nitrogen status of the cell. This Nocardia farcinica (strain IFM 10152) protein is Bifunctional glutamine synthetase adenylyltransferase/adenylyl-removing enzyme.